A 156-amino-acid chain; its full sequence is Small ribosomal subunit protein uS7 (156 aa).

Belongs to the universal ribosomal protein uS7 family. As to quaternary structure, part of the 30S ribosomal subunit. Contacts proteins S9 and S11.

Its function is as follows. One of the primary rRNA binding proteins, it binds directly to 16S rRNA where it nucleates assembly of the head domain of the 30S subunit. Is located at the subunit interface close to the decoding center, probably blocks exit of the E-site tRNA. This is Small ribosomal subunit protein uS7 from Pasteurella multocida (strain Pm70).